A 366-amino-acid polypeptide reads, in one-letter code: DNA replication and repair protein RecF (366 aa).

An ATP-binding site is contributed by 30 to 37 (GRNAQGKT).

Belongs to the RecF family.

The protein localises to the cytoplasm. Functionally, the RecF protein is involved in DNA metabolism; it is required for DNA replication and normal SOS inducibility. RecF binds preferentially to single-stranded, linear DNA. It also seems to bind ATP. The chain is DNA replication and repair protein RecF from Streptococcus thermophilus (strain ATCC BAA-250 / LMG 18311).